The primary structure comprises 192 residues: Transcriptional activator GvpE (192 aa).

A DNA-binding site is contributed by 140–145 (KRKVYR). Residues 150 to 181 (EATFDTVEPAVNRLVTFSLVLKALMIDCNARY) are leucine-zipper.

In terms of assembly, interacts with GvpD, also with c-GvpD from H.salinarum.

The protein localises to the cytoplasm. Its activity is regulated as follows. The amount of protein that accumulates is controlled by GvpD; GvpD causes a reduction in the amount of GvpE, preventing accumulation of excessive amounts of gas vesicles. In terms of biological role, plays a regulatory role in gas vesicle synthesis, activates transcription of the gvpA operon, and probably of the gvpD operon. Gas vesicles are hollow, gas filled proteinaceous nanostructures found in some microorganisms. They allow positioning of halobacteria at the optimal depth for growth in the poorly aerated, shallow brine pools of their habitat. Its function is as follows. Expression of a 9.5 kb mc-vac DNA fragment containing 2 divergently transcribed regions (gvpD-gvpE-gvpF-gvpG-gvpH-gvpI-gvpJ-gvpK-gvpL-gvpM and gvpA-gvpC-gvpN-gvpO) allows H.volcanii to produce gas vesicles. This Haloferax mediterranei (strain ATCC 33500 / DSM 1411 / JCM 8866 / NBRC 14739 / NCIMB 2177 / R-4) (Halobacterium mediterranei) protein is Transcriptional activator GvpE.